Consider the following 274-residue polypeptide: Centriolar and ciliogenesis-associated protein hyls-1 (274 aa).

Disordered regions lie at residues R156–P188 and N255–D274. A compositionally biased stretch (polar residues) spans V171–Q183. Residues E257–D274 are compositionally biased toward basic and acidic residues.

It belongs to the HYLS1 family. As to quaternary structure, interacts with sas-4; leading to its localization into newly forming centrioles.

It localises to the cytoplasm. It is found in the cytoskeleton. The protein localises to the microtubule organizing center. The protein resides in the centrosome. Its subcellular location is the centriole. It localises to the cell projection. It is found in the cilium. Its function is as follows. Plays an important role in ciliogenesis. In Caenorhabditis elegans, this protein is Centriolar and ciliogenesis-associated protein hyls-1.